We begin with the raw amino-acid sequence, 194 residues long: Peptidyl-tRNA hydrolase (194 aa).

Residue Tyr17 participates in tRNA binding. His22 serves as the catalytic Proton acceptor. The tRNA site is built by Tyr68, Asn70, and Asn116.

The protein belongs to the PTH family. Monomer.

Its subcellular location is the cytoplasm. The catalysed reaction is an N-acyl-L-alpha-aminoacyl-tRNA + H2O = an N-acyl-L-amino acid + a tRNA + H(+). Functionally, hydrolyzes ribosome-free peptidyl-tRNAs (with 1 or more amino acids incorporated), which drop off the ribosome during protein synthesis, or as a result of ribosome stalling. In terms of biological role, catalyzes the release of premature peptidyl moieties from peptidyl-tRNA molecules trapped in stalled 50S ribosomal subunits, and thus maintains levels of free tRNAs and 50S ribosomes. This is Peptidyl-tRNA hydrolase from Pseudomonas fluorescens (strain SBW25).